We begin with the raw amino-acid sequence, 303 residues long: Protoporphyrin uptake protein 1 (303 aa).

Over 1-18 (MSTTDSGFVLYHYTPSKA) the chain is Extracellular. The chain crosses the membrane as a helical span at residues 19-39 (AAIVFVVLFIIMTVIFAVQTL). The Cytoplasmic portion of the chain corresponds to 40 to 76 (YAARKSSKALKNNPFESSDDKVDSLEDAEYKQLKITP). A helical membrane pass occupies residues 77–97 (TVFAFIPFFTGCIMEAVGYIG). Over 98–111 (RALSSSNPERTTPY) the chain is Extracellular. A helical membrane pass occupies residues 112–132 (IIQSVLLLVAPALIAATIYMI). Residues 133–154 (FGRLLHVMRCQSLILISARFGT) are Cytoplasmic-facing. The chain crosses the membrane as a helical span at residues 155-175 (TFFVVGDVFSFFLQAAGGGLM). Topologically, residues 176–183 (SKAGSTKT) are extracellular. A helical membrane pass occupies residues 184 to 204 (GSGLITAGLFVQVIFFGFFII). The Cytoplasmic segment spans residues 205-226 (NEIRFTVNVKRRCLFYEDISRK). A helical membrane pass occupies residues 227 to 247 (WIFVNATLLLSSMLILLRSIV). Topologically, residues 248–264 (RIVEFIQGFNGYIISHE) are extracellular. A helical transmembrane segment spans residues 265 to 285 (YFIYVFDAVPMLLVIIAFSVG). Residues 286–303 (SFFGNVFDVIKECQTLSN) lie on the Cytoplasmic side of the membrane.

Belongs to the lipid-translocating exporter (LTE) (TC 9.A.26.1) family. In terms of processing, N-glycosylated.

It localises to the cell membrane. Involved in inducible protoporphyrin IX influx and heme efflux. In Saccharomyces cerevisiae (strain ATCC 204508 / S288c) (Baker's yeast), this protein is Protoporphyrin uptake protein 1 (PUG1).